A 454-amino-acid chain; its full sequence is Cysteine--tRNA ligase (454 aa).

Cys-27 is a Zn(2+) binding site. Residues Pro-29–His-39 carry the 'HIGH' region motif. Residues Asp-207, His-232, and Glu-236 each coordinate Zn(2+). A 'KMSKS' region motif is present at residues Lys-265 to Ser-269. Residue Lys-268 participates in ATP binding.

This sequence belongs to the class-I aminoacyl-tRNA synthetase family. Requires Zn(2+) as cofactor.

The protein localises to the cytoplasm. It catalyses the reaction tRNA(Cys) + L-cysteine + ATP = L-cysteinyl-tRNA(Cys) + AMP + diphosphate. This chain is Cysteine--tRNA ligase, found in Thermoplasma volcanium (strain ATCC 51530 / DSM 4299 / JCM 9571 / NBRC 15438 / GSS1).